Consider the following 339-residue polypeptide: Ornithine utilization regulator (339 aa).

The HTH araC/xylS-type domain occupies 241–338; sequence TRVRRLLLAR…GKLPSDYREA (98 aa). 2 consecutive DNA-binding regions (H-T-H motif) follow at residues 258-279 and 305-328; these read EQAA…SSLG and LYEI…RKWT.

In terms of biological role, probably activates the ArgJ gene that encodes ornithine acetyltransferase. Binds to its own promoter-operator region. Probably binds ornithine. The chain is Ornithine utilization regulator (oruR) from Pseudomonas aeruginosa (strain ATCC 15692 / DSM 22644 / CIP 104116 / JCM 14847 / LMG 12228 / 1C / PRS 101 / PAO1).